Here is a 1133-residue protein sequence, read N- to C-terminus: RNA-dependent RNA polymerase 2 (1133 aa).

Mg(2+) contacts are provided by Asp-830, Asp-832, and Asp-834.

The protein belongs to the RdRP family. In terms of assembly, interacts with NRPD1 and SHH1. Associates with Pol IV complex, forming an interpolymerase channel bridging their active sites, through which the Pol IV-generated transcript is handed over to the RDR2 active site after being backtracked, where it is used as the template for double-stranded RNA (dsRNA) synthesis. Interacts with JMJ24.

The protein localises to the nucleus. It is found in the nucleoplasm. It localises to the nucleolus. It catalyses the reaction RNA(n) + a ribonucleoside 5'-triphosphate = RNA(n+1) + diphosphate. Functionally, RNA-dependent direct polymerase involved in the production of small interfering RNAs (siRNAs). Binds to single-stranded RNA (ssRNA); engages ssRNAs longer than 7 nucleotides and initiates internal to their 3' ends. Able to transcribe the RNA of an RNA/DNA hybrid, the transcript produced by Pol IV, if its 3' end is accessible, to generate double-stranded small interfering RNAs (dsRNAs) precursor essential for establishing and maintaining DNA methylation. Required for the biogenesis of endogenous siRNAs of 24 nucleotide which derive from heterochromatin and DNA repeats such as transposons or endogenous gene tandem repeats, such as repeats present in FWA gene. Involved in transcriptional gene silencing (TGS). Component of the RNA-directed DNA methylation (RdDM) silencing pathway that utilizes siRNAs to guide DNA methyltransferases to asymmetric cytosines. Involved in control of flowering time through RdDM of FWA locus. Required for reception of long-distance mRNA silencing in the shoot. Required for the formation of telomeric siRNAs and the RNA-dependent DNA methylation of asymmetric cytosines in telomeric (5'-CCCTAAA-3') repeats. In Arabidopsis thaliana (Mouse-ear cress), this protein is RNA-dependent RNA polymerase 2.